Reading from the N-terminus, the 358-residue chain is Putative hydrogenase expression/formation protein MJ0993 (358 aa).

Cys-33, Cys-61, and Cys-64 together coordinate Fe cation.

It belongs to the HypD family.

In Methanocaldococcus jannaschii (strain ATCC 43067 / DSM 2661 / JAL-1 / JCM 10045 / NBRC 100440) (Methanococcus jannaschii), this protein is Putative hydrogenase expression/formation protein MJ0993.